The sequence spans 188 residues: dCTP deaminase (188 aa).

DCTP-binding positions include Lys111–Arg116, Thr135–Glu137, Gln156, Tyr170, and Gln180. Residue Glu137 is the Proton donor/acceptor of the active site.

Belongs to the dCTP deaminase family. As to quaternary structure, homotrimer.

It carries out the reaction dCTP + H2O + H(+) = dUTP + NH4(+). It functions in the pathway pyrimidine metabolism; dUMP biosynthesis; dUMP from dCTP (dUTP route): step 1/2. In terms of biological role, catalyzes the deamination of dCTP to dUTP. The sequence is that of dCTP deaminase from Pseudomonas aeruginosa (strain UCBPP-PA14).